Here is a 211-residue protein sequence, read N- to C-terminus: N-(5'-phosphoribosyl)anthranilate isomerase (211 aa).

Belongs to the TrpF family.

It carries out the reaction N-(5-phospho-beta-D-ribosyl)anthranilate = 1-(2-carboxyphenylamino)-1-deoxy-D-ribulose 5-phosphate. The protein operates within amino-acid biosynthesis; L-tryptophan biosynthesis; L-tryptophan from chorismate: step 3/5. This Methanococcus maripaludis (strain C6 / ATCC BAA-1332) protein is N-(5'-phosphoribosyl)anthranilate isomerase.